Reading from the N-terminus, the 221-residue chain is Phosphoenolpyruvate guanylyltransferase (221 aa).

Residues threonine 154, glycine 169, and serine 172 each coordinate phosphoenolpyruvate.

The protein belongs to the CofC family.

It carries out the reaction phosphoenolpyruvate + GTP + H(+) = enolpyruvoyl-2-diphospho-5'-guanosine + diphosphate. The protein operates within cofactor biosynthesis; coenzyme F420 biosynthesis. Its function is as follows. Guanylyltransferase that catalyzes the activation of phosphoenolpyruvate (PEP) as enolpyruvoyl-2-diphospho-5'-guanosine, via the condensation of PEP with GTP. It is involved in the biosynthesis of coenzyme F420, a hydride carrier cofactor. The protein is Phosphoenolpyruvate guanylyltransferase of Mycolicibacterium smegmatis (strain ATCC 700084 / mc(2)155) (Mycobacterium smegmatis).